The primary structure comprises 126 residues: Holo-[acyl-carrier-protein] synthase (126 aa).

D9 and E57 together coordinate Mg(2+).

It belongs to the P-Pant transferase superfamily. AcpS family. The cofactor is Mg(2+).

Its subcellular location is the cytoplasm. It catalyses the reaction apo-[ACP] + CoA = holo-[ACP] + adenosine 3',5'-bisphosphate + H(+). In terms of biological role, transfers the 4'-phosphopantetheine moiety from coenzyme A to a Ser of acyl-carrier-protein. This is Holo-[acyl-carrier-protein] synthase from Pseudoalteromonas atlantica (strain T6c / ATCC BAA-1087).